Consider the following 216-residue polypeptide: Octanoyltransferase (216 aa).

The region spanning 33-216 is the BPL/LPL catalytic domain; that stretch reads AQTADELWIV…AEKLTRHLSG (184 aa). Residues 72-79, 148-150, and 162-164 contribute to the substrate site; these read RGGEVTYH, ALG, and GVS. The active-site Acyl-thioester intermediate is the cysteine 180.

Belongs to the LipB family.

It localises to the cytoplasm. The enzyme catalyses octanoyl-[ACP] + L-lysyl-[protein] = N(6)-octanoyl-L-lysyl-[protein] + holo-[ACP] + H(+). Its pathway is protein modification; protein lipoylation via endogenous pathway; protein N(6)-(lipoyl)lysine from octanoyl-[acyl-carrier-protein]: step 1/2. Its function is as follows. Catalyzes the transfer of endogenously produced octanoic acid from octanoyl-acyl-carrier-protein onto the lipoyl domains of lipoate-dependent enzymes. Lipoyl-ACP can also act as a substrate although octanoyl-ACP is likely to be the physiological substrate. This is Octanoyltransferase from Herminiimonas arsenicoxydans.